Consider the following 349-residue polypeptide: Signal peptidase I (349 aa).

A run of 2 helical transmembrane segments spans residues 3–23 (NLFF…LDYF) and 25–45 (LPNT…VLWC). Residues 46–80 (YHRFVVLPKRHRQVARAEQRSGKTLSEEEKAKIEP) are Cytoplasmic-facing. A helical transmembrane segment spans residues 81 to 101 (ISEASEFLSSLFPVLAVVFLV). Over 102–349 (RSFLFEPFQI…RFERFFTAIK (248 aa)) the chain is Periplasmic. Residues serine 115 and lysine 196 contribute to the active site.

This sequence belongs to the peptidase S26 family.

It is found in the cell inner membrane. It catalyses the reaction Cleavage of hydrophobic, N-terminal signal or leader sequences from secreted and periplasmic proteins.. The chain is Signal peptidase I (lepB) from Haemophilus influenzae (strain ATCC 51907 / DSM 11121 / KW20 / Rd).